A 486-amino-acid polypeptide reads, in one-letter code: Ribulose bisphosphate carboxylase large chain (486 aa).

Residues Asn125 and Thr175 each coordinate substrate. Catalysis depends on Lys177, which acts as the Proton acceptor. Lys179 provides a ligand contact to substrate. Mg(2+) contacts are provided by Lys203, Asp205, and Glu206. The residue at position 203 (Lys203) is an N6-carboxylysine. His295 serves as the catalytic Proton acceptor. Substrate contacts are provided by Arg296, His328, and Ser380.

It belongs to the RuBisCO large chain family. Type I subfamily. As to quaternary structure, heterohexadecamer of 8 large chains and 8 small chains. Mg(2+) serves as cofactor.

It carries out the reaction 2 (2R)-3-phosphoglycerate + 2 H(+) = D-ribulose 1,5-bisphosphate + CO2 + H2O. The enzyme catalyses D-ribulose 1,5-bisphosphate + O2 = 2-phosphoglycolate + (2R)-3-phosphoglycerate + 2 H(+). Its function is as follows. RuBisCO catalyzes two reactions: the carboxylation of D-ribulose 1,5-bisphosphate, the primary event in carbon dioxide fixation, as well as the oxidative fragmentation of the pentose substrate. Both reactions occur simultaneously and in competition at the same active site. In Bradyrhizobium diazoefficiens (strain JCM 10833 / BCRC 13528 / IAM 13628 / NBRC 14792 / USDA 110), this protein is Ribulose bisphosphate carboxylase large chain.